A 284-amino-acid chain; its full sequence is 4-diphosphocytidyl-2-C-methyl-D-erythritol kinase (284 aa).

Lys17 is a catalytic residue. Residue Pro100–Ser110 coordinates ATP. The active site involves Asp142.

Belongs to the GHMP kinase family. IspE subfamily.

The enzyme catalyses 4-CDP-2-C-methyl-D-erythritol + ATP = 4-CDP-2-C-methyl-D-erythritol 2-phosphate + ADP + H(+). It functions in the pathway isoprenoid biosynthesis; isopentenyl diphosphate biosynthesis via DXP pathway; isopentenyl diphosphate from 1-deoxy-D-xylulose 5-phosphate: step 3/6. In terms of biological role, catalyzes the phosphorylation of the position 2 hydroxy group of 4-diphosphocytidyl-2C-methyl-D-erythritol. The protein is 4-diphosphocytidyl-2-C-methyl-D-erythritol kinase of Aromatoleum aromaticum (strain DSM 19018 / LMG 30748 / EbN1) (Azoarcus sp. (strain EbN1)).